Reading from the N-terminus, the 251-residue chain is uncharacterized protein (251 aa).

Residues 229–251 are disordered; it reads TSTETSPEHQADLKDDNSDISST. Over residues 234–245 the composition is skewed to basic and acidic residues; it reads SPEHQADLKDDN.

This is an uncharacterized protein from Acanthamoeba polyphaga (Amoeba).